Here is a 445-residue protein sequence, read N- to C-terminus: Na(+)-translocating NADH-quinone reductase subunit A (445 aa).

It belongs to the NqrA family. In terms of assembly, composed of six subunits; NqrA, NqrB, NqrC, NqrD, NqrE and NqrF.

The enzyme catalyses a ubiquinone + n Na(+)(in) + NADH + H(+) = a ubiquinol + n Na(+)(out) + NAD(+). Functionally, NQR complex catalyzes the reduction of ubiquinone-1 to ubiquinol by two successive reactions, coupled with the transport of Na(+) ions from the cytoplasm to the periplasm. NqrA to NqrE are probably involved in the second step, the conversion of ubisemiquinone to ubiquinol. The polypeptide is Na(+)-translocating NADH-quinone reductase subunit A (Pseudomonas aeruginosa (strain ATCC 15692 / DSM 22644 / CIP 104116 / JCM 14847 / LMG 12228 / 1C / PRS 101 / PAO1)).